Consider the following 662-residue polypeptide: UvrABC system protein B (662 aa).

Residues lysine 25 to arginine 182 form the Helicase ATP-binding domain. An ATP-binding site is contributed by glycine 38–threonine 45. The Beta-hairpin signature appears at tyrosine 91–isoleucine 114. The region spanning glutamine 429 to isoleucine 595 is the Helicase C-terminal domain. The 36-residue stretch at aspartate 622–aspartate 657 folds into the UVR domain.

This sequence belongs to the UvrB family. Forms a heterotetramer with UvrA during the search for lesions. Interacts with UvrC in an incision complex.

Its subcellular location is the cytoplasm. Functionally, the UvrABC repair system catalyzes the recognition and processing of DNA lesions. A damage recognition complex composed of 2 UvrA and 2 UvrB subunits scans DNA for abnormalities. Upon binding of the UvrA(2)B(2) complex to a putative damaged site, the DNA wraps around one UvrB monomer. DNA wrap is dependent on ATP binding by UvrB and probably causes local melting of the DNA helix, facilitating insertion of UvrB beta-hairpin between the DNA strands. Then UvrB probes one DNA strand for the presence of a lesion. If a lesion is found the UvrA subunits dissociate and the UvrB-DNA preincision complex is formed. This complex is subsequently bound by UvrC and the second UvrB is released. If no lesion is found, the DNA wraps around the other UvrB subunit that will check the other stand for damage. In Clostridium botulinum (strain Kyoto / Type A2), this protein is UvrABC system protein B.